The following is a 135-amino-acid chain: Small ribosomal subunit protein uS11 (135 aa).

The protein belongs to the universal ribosomal protein uS11 family. In terms of assembly, part of the 30S ribosomal subunit. Interacts with proteins S7 and S18. Binds to IF-3.

Located on the platform of the 30S subunit, it bridges several disparate RNA helices of the 16S rRNA. Forms part of the Shine-Dalgarno cleft in the 70S ribosome. The polypeptide is Small ribosomal subunit protein uS11 (Solibacter usitatus (strain Ellin6076)).